The chain runs to 257 residues: NAD-capped RNA hydrolase NudC (257 aa).

Substrate-binding residues include Lys-25 and Arg-69. Zn(2+) contacts are provided by Cys-98 and Cys-101. Glu-111 contacts substrate. Zn(2+) is bound by residues Cys-116 and Cys-119. Tyr-124 contributes to the substrate binding site. One can recognise a Nudix hydrolase domain in the interval 125–248; it reads PQIAPCIIVA…TVARRLIEDT (124 aa). The a divalent metal cation site is built by Ala-158, Glu-174, and Glu-178. Positions 159 to 180 match the Nudix box motif; the sequence is GFVEVGETLEQAVAREVMEESG. 192 to 199 contacts substrate; that stretch reads QPWPFPQS. Glu-219 contacts a divalent metal cation. Substrate is bound at residue Ala-241.

This sequence belongs to the Nudix hydrolase family. NudC subfamily. Homodimer. Mg(2+) is required as a cofactor. It depends on Mn(2+) as a cofactor. Zn(2+) serves as cofactor.

The catalysed reaction is a 5'-end NAD(+)-phospho-ribonucleoside in mRNA + H2O = a 5'-end phospho-adenosine-phospho-ribonucleoside in mRNA + beta-nicotinamide D-ribonucleotide + 2 H(+). It carries out the reaction NAD(+) + H2O = beta-nicotinamide D-ribonucleotide + AMP + 2 H(+). It catalyses the reaction NADH + H2O = reduced beta-nicotinamide D-ribonucleotide + AMP + 2 H(+). MRNA decapping enzyme that specifically removes the nicotinamide adenine dinucleotide (NAD) cap from a subset of mRNAs by hydrolyzing the diphosphate linkage to produce nicotinamide mononucleotide (NMN) and 5' monophosphate mRNA. The NAD-cap is present at the 5'-end of some mRNAs and stabilizes RNA against 5'-processing. Has preference for mRNAs with a 5'-end purine. Catalyzes the hydrolysis of a broad range of dinucleotide pyrophosphates. This is NAD-capped RNA hydrolase NudC from Escherichia coli O45:K1 (strain S88 / ExPEC).